We begin with the raw amino-acid sequence, 99 residues long: Large ribosomal subunit protein eL42 (99 aa).

Belongs to the eukaryotic ribosomal protein eL42 family.

This chain is Large ribosomal subunit protein eL42 (RPL44), found in Chlamydomonas reinhardtii (Chlamydomonas smithii).